A 337-amino-acid polypeptide reads, in one-letter code: Endochitinase 37 (337 aa).

An N-terminal signal peptide occupies residues 1 to 25 (MTRLLDASFLLLPVIASTLFGTASA). Residues 38-337 (KVLQGYWENW…GSKNWTFGDN (300 aa)) enclose the GH18 domain. Glu-160 (proton donor) is an active-site residue. An N-linked (GlcNAc...) asparagine glycan is attached at Asn-331.

The protein belongs to the glycosyl hydrolase 18 family. Chitinase class V subfamily. In terms of assembly, monomer.

Its subcellular location is the secreted. It carries out the reaction Random endo-hydrolysis of N-acetyl-beta-D-glucosaminide (1-&gt;4)-beta-linkages in chitin and chitodextrins.. Functionally, secreted chitinase involved in the degradation of chitin, a component of the cell walls of fungi and exoskeletal elements of some animals (including worms and arthropods). Plays a morphogenetic role during apical growth, cell division and differentiation (cell wall morphogenesis). May be involved in the degradation and further assimilation of phytopathogenic fungi, namely mycoparasitism, the major mechanism accounting for the antagonistic activity against phytopathogenic fungi displayed by Trichoderma. This Trichoderma harzianum (Hypocrea lixii) protein is Endochitinase 37 (chit37).